The sequence spans 374 residues: AA14 family lytic polysaccharide monooxygenase B (374 aa).

An N-terminal signal peptide occupies residues 1 to 18 (MIPVFLAAIAVFLPLTSG). Asparagine 31, asparagine 49, asparagine 94, and asparagine 151 each carry an N-linked (GlcNAc...) asparagine glycan. Intrachain disulfides connect cysteine 85/cysteine 108, cysteine 127/cysteine 154, cysteine 171/cysteine 176, cysteine 178/cysteine 200, and cysteine 220/cysteine 236. Asparagine 235 and asparagine 315 each carry an N-linked (GlcNAc...) asparagine glycan. Residues 306–374 (ISNATPAPSN…TQSRKMRYVF (69 aa)) are disordered. Low complexity predominate over residues 313–344 (PSNGSCSSRPPSSPVSSSAASTTTSRSPRPSA).

It belongs to the polysaccharide monooxygenase AA14 family. The cofactor is Cu(2+).

The protein localises to the secreted. In terms of biological role, lytic polysaccharide monooxygenase (LPMO) that oxidatively cleaves xylan with both C1 and C4 regioselectivity and that specifically targets the protective shield made by heteroxylans that cover cellulose microfibrils in wood. Catalysis by LPMOs requires the reduction of the active-site copper from Cu(II) to Cu(I) by a reducing agent and H(2)O(2) or O(2) as a cosubstrate. Cleavage occurs only when xylans are bound to cellulose and not when they are in solution. Increases the efficiency of wood saccharification through oxidative cleavage of highly refractory xylan-coated cellulose fibers via synergistic relationship with xylan-active enzymes, xylobiohydrolases and cellobiohydrolases. This chain is AA14 family lytic polysaccharide monooxygenase B, found in Pycnoporus cinnabarinus (Cinnabar-red polypore).